The chain runs to 453 residues: Armadillo repeat-containing X-linked protein 1 (453 aa).

Residues M1–E6 lie on the Mitochondrial intermembrane side of the membrane. 2 mitochondrion outer membrane (MOM)-targeting sequence regions span residues M1 to E6 and R26 to K36. A helical; Signal-anchor membrane pass occupies residues A7–W29. The Cytoplasmic portion of the chain corresponds to G30 to L453. 2 disordered regions span residues A58–K77 and I132–A182. The segment covering G167 to S177 has biased composition (basic residues). ARM repeat units lie at residues P195–A235, S237–V276, P358–D398, and S415–L453.

It belongs to the eutherian X-chromosome-specific Armcx family. Interacts with MIRO1. As to expression, expressed at high levels ovary, heart, testis, prostate, brain, spleen and colon. Expressed at very low levels in liver and thymus. Not expressed in peripheral blood leukocytes. Not or reduced expressed in lung, prostate, colon, pancreas and ovarian carcinomas.

Its subcellular location is the mitochondrion. The protein resides in the mitochondrion outer membrane. Its function is as follows. Regulates mitochondrial transport during axon regeneration. Increases the proportion of motile mitochondria by recruiting stationary mitochondria into the motile pool. Enhances mitochondria movement and neurite growth in both adult axons and embryonic neurons. Promotes neuronal survival and axon regeneration after nerve injury. May link mitochondria to the Trak1-kinesin motor complex via its interaction with MIRO1. This is Armadillo repeat-containing X-linked protein 1 (ARMCX1) from Homo sapiens (Human).